A 431-amino-acid polypeptide reads, in one-letter code: Histidinol dehydrogenase (431 aa).

Residues Tyr-127, Gln-189, and Asn-212 each coordinate NAD(+). Substrate contacts are provided by Ser-237, Gln-259, and His-262. 2 residues coordinate Zn(2+): Gln-259 and His-262. Active-site proton acceptor residues include Glu-326 and His-327. Residues His-327, Asp-360, Glu-414, and His-419 each coordinate substrate. Asp-360 is a binding site for Zn(2+). Position 419 (His-419) interacts with Zn(2+).

Belongs to the histidinol dehydrogenase family. Zn(2+) serves as cofactor.

The enzyme catalyses L-histidinol + 2 NAD(+) + H2O = L-histidine + 2 NADH + 3 H(+). It functions in the pathway amino-acid biosynthesis; L-histidine biosynthesis; L-histidine from 5-phospho-alpha-D-ribose 1-diphosphate: step 9/9. Catalyzes the sequential NAD-dependent oxidations of L-histidinol to L-histidinaldehyde and then to L-histidine. In Xanthomonas euvesicatoria pv. vesicatoria (strain 85-10) (Xanthomonas campestris pv. vesicatoria), this protein is Histidinol dehydrogenase.